Reading from the N-terminus, the 312-residue chain is Taste receptor type 2 member 9 (312 aa).

Residues 1–9 are Extracellular-facing; that stretch reads MPSAIEAIY. The chain crosses the membrane as a helical span at residues 10–32; sequence IILIAGELTIGIWGNGFIVLVNC. At 33–52 the chain is on the cytoplasmic side; sequence IDWLKRRDISLIDIILISLA. The chain crosses the membrane as a helical span at residues 53–72; that stretch reads ISRICLLCVISLDGFFMLLF. The Extracellular segment spans residues 73-86; it reads PGTYGNSVLVSIVN. The helical transmembrane segment at 87 to 109 threads the bilayer; it reads VVWTFANNSSLWFTSCLSIFYLL. Over 110–128 the chain is Cytoplasmic; sequence KIANISHPFFFWLKLKINK. Residues 129-146 traverse the membrane as a helical segment; sequence VMLAILLGSFLISLIISV. Residues 147–180 are Extracellular-facing; it reads PKNDDMWYHLFKVSHEENITWKFKVSKIPGTFKQ. Asparagine 164 is a glycosylation site (N-linked (GlcNAc...) asparagine). Residues 181-203 traverse the membrane as a helical segment; the sequence is LTLNLGVMVPFILCLISFFLLLF. The Cytoplasmic segment spans residues 204–234; that stretch reads SLVRHTKQIRLHATGFRDPSTEAHMRAIKAV. Residues 235–257 form a helical membrane-spanning segment; that stretch reads IIFLLLLIVYYPVFLVMTSSALI. Residues 258-261 are Extracellular-facing; sequence PQGK. Residues 262–284 form a helical membrane-spanning segment; the sequence is LVLMIGDIVTVIFPSSHSFILIM. The Cytoplasmic segment spans residues 285–312; the sequence is GNSKLREAFLKMLRFVKCFLRRRKPFVP.

Belongs to the G-protein coupled receptor T2R family. As to expression, expressed in subsets of taste receptor cells of the tongue and palate epithelium and exclusively in gustducin-positive cells.

It localises to the membrane. Its function is as follows. Gustducin-coupled receptor implicated in the perception of bitter compounds in the oral cavity and the gastrointestinal tract. Signals through PLCB2 and the calcium-regulated cation channel TRPM5. This is Taste receptor type 2 member 9 (TAS2R9) from Homo sapiens (Human).